Consider the following 417-residue polypeptide: Serine hydroxymethyltransferase (417 aa).

Residues Leu-121 and 125–127 contribute to the (6S)-5,6,7,8-tetrahydrofolate site; that span reads GHL. Lys-229 carries the N6-(pyridoxal phosphate)lysine modification. (6S)-5,6,7,8-tetrahydrofolate is bound at residue 355–357; it reads SPF.

It belongs to the SHMT family. Homodimer. The cofactor is pyridoxal 5'-phosphate.

It localises to the cytoplasm. It catalyses the reaction (6R)-5,10-methylene-5,6,7,8-tetrahydrofolate + glycine + H2O = (6S)-5,6,7,8-tetrahydrofolate + L-serine. It participates in one-carbon metabolism; tetrahydrofolate interconversion. Its pathway is amino-acid biosynthesis; glycine biosynthesis; glycine from L-serine: step 1/1. In terms of biological role, catalyzes the reversible interconversion of serine and glycine with tetrahydrofolate (THF) serving as the one-carbon carrier. This reaction serves as the major source of one-carbon groups required for the biosynthesis of purines, thymidylate, methionine, and other important biomolecules. Also exhibits THF-independent aldolase activity toward beta-hydroxyamino acids, producing glycine and aldehydes, via a retro-aldol mechanism. This Salmonella paratyphi C (strain RKS4594) protein is Serine hydroxymethyltransferase.